An 84-amino-acid polypeptide reads, in one-letter code: ATP synthase subunit c (84 aa).

A run of 2 helical transmembrane segments spans residues 9 to 29 (IIGA…GFAI) and 54 to 74 (IVAG…LLFI).

The protein belongs to the ATPase C chain family. As to quaternary structure, F-type ATPases have 2 components, F(1) - the catalytic core - and F(0) - the membrane proton channel. F(1) has five subunits: alpha(3), beta(3), gamma(1), delta(1), epsilon(1). F(0) has three main subunits: a(1), b(2) and c(10-14). The alpha and beta chains form an alternating ring which encloses part of the gamma chain. F(1) is attached to F(0) by a central stalk formed by the gamma and epsilon chains, while a peripheral stalk is formed by the delta and b chains.

It is found in the cell inner membrane. Functionally, f(1)F(0) ATP synthase produces ATP from ADP in the presence of a proton or sodium gradient. F-type ATPases consist of two structural domains, F(1) containing the extramembraneous catalytic core and F(0) containing the membrane proton channel, linked together by a central stalk and a peripheral stalk. During catalysis, ATP synthesis in the catalytic domain of F(1) is coupled via a rotary mechanism of the central stalk subunits to proton translocation. In terms of biological role, key component of the F(0) channel; it plays a direct role in translocation across the membrane. A homomeric c-ring of between 10-14 subunits forms the central stalk rotor element with the F(1) delta and epsilon subunits. In Haemophilus influenzae (strain PittEE), this protein is ATP synthase subunit c.